A 377-amino-acid chain; its full sequence is DNA replication and repair protein RecF (377 aa).

Gly30–Thr37 provides a ligand contact to ATP.

The protein belongs to the RecF family.

The protein resides in the cytoplasm. The RecF protein is involved in DNA metabolism; it is required for DNA replication and normal SOS inducibility. RecF binds preferentially to single-stranded, linear DNA. It also seems to bind ATP. The polypeptide is DNA replication and repair protein RecF (Cytophaga hutchinsonii (strain ATCC 33406 / DSM 1761 / CIP 103989 / NBRC 15051 / NCIMB 9469 / D465)).